A 1145-amino-acid chain; its full sequence is DNA-directed RNA polymerase subunit beta (1145 aa).

The segment covering 1101–1112 (LPEERRVSSSKE) has biased composition (basic and acidic residues). Residues 1101-1145 (LPEERRVSSSKEEIEEEEEVEDNSDEFDETFLEEAEDDFSLDDED) form a disordered region. Acidic residues predominate over residues 1113–1145 (EIEEEEEVEDNSDEFDETFLEEAEDDFSLDDED).

Belongs to the RNA polymerase beta chain family. The RNAP catalytic core consists of 2 alpha, 1 beta, 1 beta' and 1 omega subunit. When a sigma factor is associated with the core the holoenzyme is formed, which can initiate transcription.

The enzyme catalyses RNA(n) + a ribonucleoside 5'-triphosphate = RNA(n+1) + diphosphate. DNA-dependent RNA polymerase catalyzes the transcription of DNA into RNA using the four ribonucleoside triphosphates as substrates. The sequence is that of DNA-directed RNA polymerase subunit beta from Desulforamulus reducens (strain ATCC BAA-1160 / DSM 100696 / MI-1) (Desulfotomaculum reducens).